Reading from the N-terminus, the 396-residue chain is Elongation factor Tu (396 aa).

The tr-type G domain occupies Lys-10–Glu-206. The G1 stretch occupies residues Gly-19–Thr-26. Gly-19–Thr-26 contacts GTP. Residue Thr-26 participates in Mg(2+) binding. The tract at residues Gly-60–Asn-64 is G2. Residues Asp-81–Gly-84 form a G3 region. GTP is bound by residues Asp-81–His-85 and Asn-136–Asp-139. The interval Asn-136 to Asp-139 is G4. Residues Ser-174 to Lys-176 form a G5 region.

This sequence belongs to the TRAFAC class translation factor GTPase superfamily. Classic translation factor GTPase family. EF-Tu/EF-1A subfamily. As to quaternary structure, monomer.

The protein resides in the cytoplasm. The catalysed reaction is GTP + H2O = GDP + phosphate + H(+). GTP hydrolase that promotes the GTP-dependent binding of aminoacyl-tRNA to the A-site of ribosomes during protein biosynthesis. In Herminiimonas arsenicoxydans, this protein is Elongation factor Tu.